Reading from the N-terminus, the 502-residue chain is Probable zinc metalloprotease MGG_02107 (502 aa).

The N-terminal stretch at 1-21 (MRSPPGAVAALASVAAQLATA) is a signal peptide. The Zn(2+) site is built by histidine 182, aspartate 202, and glutamate 235. Asparagine 250 carries N-linked (GlcNAc...) asparagine glycosylation. Aspartate 262 is a Zn(2+) binding site. A disordered region spans residues 284 to 307 (QGGSPAGESKERAETRASIGGEND). 3 N-linked (GlcNAc...) asparagine glycosylation sites follow: asparagine 375, asparagine 417, and asparagine 427. A Fibronectin type-III domain is found at 414–502 (QVRNVTVDTS…KSPATMPFPG (89 aa)).

The protein belongs to the peptidase M28 family. M28B subfamily. It depends on Zn(2+) as a cofactor.

The protein resides in the secreted. The polypeptide is Probable zinc metalloprotease MGG_02107 (Pyricularia oryzae (strain 70-15 / ATCC MYA-4617 / FGSC 8958) (Rice blast fungus)).